We begin with the raw amino-acid sequence, 258 residues long: Shikimate dehydrogenase (NADP(+)) (258 aa).

Residues 14 to 16 (SES) and Thr61 contribute to the shikimate site. Lys65 serves as the catalytic Proton acceptor. Residues Asn86 and Asp101 each contribute to the shikimate site. NADP(+)-binding positions include 125-129 (GSGGS) and Leu211. Tyr213 is a shikimate binding site. Gly234 serves as a coordination point for NADP(+).

It belongs to the shikimate dehydrogenase family. In terms of assembly, homodimer.

It carries out the reaction shikimate + NADP(+) = 3-dehydroshikimate + NADPH + H(+). Its pathway is metabolic intermediate biosynthesis; chorismate biosynthesis; chorismate from D-erythrose 4-phosphate and phosphoenolpyruvate: step 4/7. Its function is as follows. Involved in the biosynthesis of the chorismate, which leads to the biosynthesis of aromatic amino acids. Catalyzes the reversible NADPH linked reduction of 3-dehydroshikimate (DHSA) to yield shikimate (SA). The protein is Shikimate dehydrogenase (NADP(+)) of Clostridium botulinum (strain ATCC 19397 / Type A).